Here is a 208-residue protein sequence, read N- to C-terminus: Small ribosomal subunit protein uS4 (208 aa).

In terms of domain architecture, S4 RNA-binding spans 98-161; that stretch reads RRLDNVVYRL…RKSKRFKEVF (64 aa).

This sequence belongs to the universal ribosomal protein uS4 family. Part of the 30S ribosomal subunit. Contacts protein S5. The interaction surface between S4 and S5 is involved in control of translational fidelity.

One of the primary rRNA binding proteins, it binds directly to 16S rRNA where it nucleates assembly of the body of the 30S subunit. In terms of biological role, with S5 and S12 plays an important role in translational accuracy. This Halothermothrix orenii (strain H 168 / OCM 544 / DSM 9562) protein is Small ribosomal subunit protein uS4.